The primary structure comprises 101 residues: Iron-sulfur cluster assembly protein CyaY (101 aa).

This sequence belongs to the frataxin family.

Its function is as follows. Involved in iron-sulfur (Fe-S) cluster assembly. May act as a regulator of Fe-S biogenesis. The polypeptide is Iron-sulfur cluster assembly protein CyaY (Haemophilus influenzae (strain PittEE)).